The sequence spans 314 residues: uncharacterized protein (314 aa).

The N-terminal 29 residues, 1 to 29 (MMRLIRTLPLRCFKTRIRRQGSLLCLRCF), are a transit peptide targeting the mitochondrion. The interval 52–74 (SSSPLSKNKEKQEKPEKENEGKH) is disordered. Residues 58–74 (KNKEKQEKPEKENEGKH) are compositionally biased toward basic and acidic residues. Positions 177-207 (LNEHHLQLLKLKRELNSIHDELNEIIIDLLQ) form a coiled coil. The chain crosses the membrane as a helical span at residues 262-279 (GLLVILVLVCSIMIGVSA). The interval 281-314 (KKERPGLQEPEEPEILAPKEDIDTTFPQDQHDID) is disordered.

Its subcellular location is the mitochondrion membrane. This is an uncharacterized protein from Saccharomyces cerevisiae (strain ATCC 204508 / S288c) (Baker's yeast).